The following is a 187-amino-acid chain: Ribosome-recycling factor (187 aa).

This sequence belongs to the RRF family.

It is found in the cytoplasm. In terms of biological role, responsible for the release of ribosomes from messenger RNA at the termination of protein biosynthesis. May increase the efficiency of translation by recycling ribosomes from one round of translation to another. The polypeptide is Ribosome-recycling factor (Flavobacterium johnsoniae (strain ATCC 17061 / DSM 2064 / JCM 8514 / BCRC 14874 / CCUG 350202 / NBRC 14942 / NCIMB 11054 / UW101) (Cytophaga johnsonae)).